The sequence spans 238 residues: Ribosomal RNA small subunit methyltransferase G (238 aa).

S-adenosyl-L-methionine is bound by residues Gly75, Leu80, 126 to 127, and Arg142; that span reads AE.

It belongs to the methyltransferase superfamily. RNA methyltransferase RsmG family.

Its subcellular location is the cytoplasm. Its function is as follows. Specifically methylates the N7 position of guanine in position 518 of 16S rRNA. This Streptomyces avermitilis (strain ATCC 31267 / DSM 46492 / JCM 5070 / NBRC 14893 / NCIMB 12804 / NRRL 8165 / MA-4680) protein is Ribosomal RNA small subunit methyltransferase G.